The chain runs to 199 residues: SCO2-like protein RBE_0029 (199 aa).

The protein belongs to the SCO1/2 family.

This chain is SCO2-like protein RBE_0029, found in Rickettsia bellii (strain RML369-C).